The following is a 134-amino-acid chain: Small ribosomal subunit protein bS6 (134 aa).

The segment covering 113–122 (NRDIKEKEQP) has biased composition (basic and acidic residues). The tract at residues 113 to 134 (NRDIKEKEQPSESNVDADLKVN) is disordered.

The protein belongs to the bacterial ribosomal protein bS6 family.

Its function is as follows. Binds together with bS18 to 16S ribosomal RNA. This Borrelia duttonii (strain Ly) protein is Small ribosomal subunit protein bS6.